The sequence spans 802 residues: Cullin-4 (802 aa).

2 stretches are compositionally biased toward low complexity: residues 1–33 (MNFNNNNNNNNNNNNNNNLNNNNNNVNNINNNN) and 656–676 (STSSNTSSNTSSNTSSSASGS). Disordered regions lie at residues 1–43 (MNFN…SLAG) and 656–686 (STSSNTSSNTSSNTSSSASGSASGGASGGAT). Residues 734–794 (DRQYQVDAAI…KEYLCRDPEN (61 aa)) form the Cullin neddylation domain. Residue Lys-748 forms a Glycyl lysine isopeptide (Lys-Gly) (interchain with G-Cter in NEDD8) linkage.

Belongs to the cullin family. In terms of processing, neddylated. Deneddylated via its interaction with the COP9 signalosome (CSN) complex.

It participates in protein modification; protein ubiquitination. Its function is as follows. Probable core component of cullin-based SCF-like E3 ubiquitin-protein ligase complexes which mediate the ubiquitination and subsequent proteasomal degradation of target proteins. The E3 ubiquitin-protein ligase activity of the complex is dependent on the neddylation of the cullin subunit. This Dictyostelium discoideum (Social amoeba) protein is Cullin-4 (culD).